Here is a 426-residue protein sequence, read N- to C-terminus: MSTVRESWLKPKKNIQTNLGDYEDMDKISRLPDDLLVKVLLFLPTKIAVSTSILSKRWEFLWMWLPKLEYHNTNYSASEEQRLRSFINLNLQLHRAPIIESLRLKFSLGRSIKPQNIKQWIIIAVFRCVRELSINLFPLYCIENPAKLPSSLYISKSLVILKLKDQILVDVPRMAYLPSLKYLLLKRVTYKDSNSLHQLLSSCPVLKNLVVERDEYNHDETLSITVSSLQRLTLKISRGGSFDELVINTPSLKYFKLTDYLGECETELDDDSYSYVFKDMPKLEEAHIDSTYPDIGKFVRSITSVKRLSLCVKVNAEEALYREGICFKQLEHLKLCPCDSNWSKLLARLLKDSPNLRELEIKLNKDHKASFDDPACLENQLNYVVQSSIPSLERFTWTWIYGSQNEIDYLEKLKKRLLLTNWQNLV.

The F-box domain maps to 25-71 (MDKISRLPDDLLVKVLLFLPTKIAVSTSILSKRWEFLWMWLPKLEYH). LRR repeat units follow at residues 50 to 75 (STSILSKRWEFLWMWLPKLEYHNTNY), 80 to 106 (EQRLRSFINLNLQLHRAPIIESLRLKF), 160 to 187 (ILKLKDQILVDVPRMAYLPSLKYLLLKR), 188 to 213 (VTYKDSNSLHQLLSSCPVLKNLVVER), 221 to 259 (TLSITVSSLQRLTLKISRGGSFDELVINTPSLKYFKLTD), 265 to 290 (ETELDDDSYSYVFKDMPKLEEAHIDS), 311 to 337 (CVKVNAEEALYREGICFKQLEHLKLCP), 338 to 363 (CDSNWSKLLARLLKDSPNLRELEIKL), and 373 to 399 (DPACLENQLNYVVQSSIPSLERFTWTW).

The chain is Putative F-box/LRR-repeat protein At4g15060 from Arabidopsis thaliana (Mouse-ear cress).